A 346-amino-acid chain; its full sequence is MISEAPPFWWRKADWRAWLLAPLSFLYGRIAGHRMAHARRASVSVPVICVGNFTVGGAGKTPTALTLARAAKAKGLKPGFLSRGYGGSLDVTTVVDPLHHRAVAVGDEPLLLAQEALTVISRRRLDGARRLVAEGADLIIMDDGFQSARLAIDYALLVIDATRGLGNGHIVPAGPVRAPIRQQLRSATALLKVGGGNAADGIVRMAARAAKPYFTASLKVRGDDRLSGIKVLAFAGIADPAKFFRTVESRGAEIAVAKTFGDHEHLTEEEIDDILTTAERQDLLIVTTSKDFVRLSGHHGKAEQLAQKARVIEVDIVFEDHLAPGLIIDRAIIACRDRRLKELKTS.

54–61 (TVGGAGKT) serves as a coordination point for ATP.

The protein belongs to the LpxK family.

The catalysed reaction is a lipid A disaccharide + ATP = a lipid IVA + ADP + H(+). The protein operates within glycolipid biosynthesis; lipid IV(A) biosynthesis; lipid IV(A) from (3R)-3-hydroxytetradecanoyl-[acyl-carrier-protein] and UDP-N-acetyl-alpha-D-glucosamine: step 6/6. Transfers the gamma-phosphate of ATP to the 4'-position of a tetraacyldisaccharide 1-phosphate intermediate (termed DS-1-P) to form tetraacyldisaccharide 1,4'-bis-phosphate (lipid IVA). The chain is Tetraacyldisaccharide 4'-kinase from Rhizobium etli (strain ATCC 51251 / DSM 11541 / JCM 21823 / NBRC 15573 / CFN 42).